Reading from the N-terminus, the 229-residue chain is MRIVLFGAPGVGKGTFAEILSKKENLKHINVGNILRNEIKKESNIGKEVQNVVRSGNLVSDSLIINIVHDEMKNILNKKYKGFILDGFPRNMYQSKELIKMTNIDLFVNIYLPRNILIKKLLGRRICNICDKNFNVSNIQQDSFDMPPILPSKDCIQCNGHTNLIKRKDDNEDIINHRLNSYESDYIPIIQFFKNEKYNLIDFPLRRGIRDFDDFYSILVNYRKNEKLK.

10 to 15 is an a ribonucleoside 5'-triphosphate binding site; sequence GVGKGT. Positions 30-59 are NMP; sequence NVGNILRNEIKKESNIGKEVQNVVRSGNLV. Residues R36, 57-59, G87, 87-90, and Q94 contribute to the AMP site; these read NLV and GFPR. The interval 123 to 170 is LID; it reads GRRICNICDKNFNVSNIQQDSFDMPPILPSKDCIQCNGHTNLIKRKDD. An AMP-binding site is contributed by R178.

Belongs to the adenylate kinase family.

It is found in the mitochondrion. It carries out the reaction a ribonucleoside 5'-triphosphate + AMP = a ribonucleoside 5'-diphosphate + ADP. It catalyses the reaction GTP + AMP = GDP + ADP. With respect to regulation, inhibited by the dinucleoside pentaphosphate compound P1,P5-di(guanosine-5') pentaphosphate (GP5A). Its function is as follows. Catalyzes the reversible transfer of the terminal phosphate group between GTP and AMP. Has very low activity with UTP, ITP, CTP and IMP and no activity with ATP, GMP, CMP and UMP in vitro. The sequence is that of GTP:AMP phosphotransferase from Plasmodium falciparum (isolate 3D7).